Here is a 428-residue protein sequence, read N- to C-terminus: Light-independent protochlorophyllide reductase subunit N (428 aa).

Residues Cys29, Cys54, and Cys115 each coordinate [4Fe-4S] cluster.

Belongs to the BchN/ChlN family. In terms of assembly, protochlorophyllide reductase is composed of three subunits; BchL, BchN and BchB. Forms a heterotetramer of two BchB and two BchN subunits. The cofactor is [4Fe-4S] cluster.

It catalyses the reaction chlorophyllide a + oxidized 2[4Fe-4S]-[ferredoxin] + 2 ADP + 2 phosphate = protochlorophyllide a + reduced 2[4Fe-4S]-[ferredoxin] + 2 ATP + 2 H2O. It functions in the pathway porphyrin-containing compound metabolism; bacteriochlorophyll biosynthesis (light-independent). Component of the dark-operative protochlorophyllide reductase (DPOR) that uses Mg-ATP and reduced ferredoxin to reduce ring D of protochlorophyllide (Pchlide) to form chlorophyllide a (Chlide). This reaction is light-independent. The NB-protein (BchN-BchB) is the catalytic component of the complex. In Cereibacter sphaeroides (strain ATCC 17025 / ATH 2.4.3) (Rhodobacter sphaeroides), this protein is Light-independent protochlorophyllide reductase subunit N.